Reading from the N-terminus, the 170-residue chain is 3-hydroxydecanoyl-[acyl-carrier-protein] dehydratase (170 aa).

Residue His69 is part of the active site.

It belongs to the thioester dehydratase family. FabA subfamily. As to quaternary structure, homodimer.

It is found in the cytoplasm. It catalyses the reaction a (3R)-hydroxyacyl-[ACP] = a (2E)-enoyl-[ACP] + H2O. It carries out the reaction (3R)-hydroxydecanoyl-[ACP] = (2E)-decenoyl-[ACP] + H2O. The enzyme catalyses (2E)-decenoyl-[ACP] = (3Z)-decenoyl-[ACP]. Its pathway is lipid metabolism; fatty acid biosynthesis. Its function is as follows. Necessary for the introduction of cis unsaturation into fatty acids. Catalyzes the dehydration of (3R)-3-hydroxydecanoyl-ACP to E-(2)-decenoyl-ACP and then its isomerization to Z-(3)-decenoyl-ACP. Can catalyze the dehydratase reaction for beta-hydroxyacyl-ACPs with saturated chain lengths up to 16:0, being most active on intermediate chain length. This is 3-hydroxydecanoyl-[acyl-carrier-protein] dehydratase from Idiomarina loihiensis (strain ATCC BAA-735 / DSM 15497 / L2-TR).